The chain runs to 641 residues: Bifunctional protein glk (641 aa).

The tract at residues 1 to 340 (MSTGAQTKAA…QLSNRTGGAS (340 aa)) is glucokinase. 23 to 28 (ADVGGT) is an ATP binding site. Residues 341–417 (SAVFERIRQM…LKLATGLTGT (77 aa)) enclose the HTH rpiR-type domain. The tract at residues 341–641 (SAVFERIRQM…SHGAAPAAKD (301 aa)) is putative HTH-type transcriptional regulator. The H-T-H motif DNA-binding region spans 377-396 (IVNIARKADVSQPTVIRFCR). The region spanning 461 to 600 (AIDILNNARR…AVGVAIRRAA (140 aa)) is the SIS domain. The chain crosses the membrane as a helical span at residues 576–596 (SMISRILHLVMIDILAVGVAI).

In the N-terminal section; belongs to the bacterial glucokinase family.

The protein resides in the membrane. The enzyme catalyses D-glucose + ATP = D-glucose 6-phosphate + ADP + H(+). This is Bifunctional protein glk (glk) from Burkholderia mallei (strain ATCC 23344).